The primary structure comprises 349 residues: tRNA pseudouridine synthase D (349 aa).

Phe-27 serves as a coordination point for substrate. The active-site Nucleophile is the Asp-80. A substrate-binding site is contributed by Asn-129. A TRUD domain is found at 155–303; the sequence is GVPNYFGAQR…VEAARRAMLL (149 aa). Phe-329 contributes to the substrate binding site.

Belongs to the pseudouridine synthase TruD family.

The catalysed reaction is uridine(13) in tRNA = pseudouridine(13) in tRNA. Functionally, responsible for synthesis of pseudouridine from uracil-13 in transfer RNAs. The protein is tRNA pseudouridine synthase D of Klebsiella pneumoniae (strain 342).